Reading from the N-terminus, the 348-residue chain is Phosphoribosylformylglycinamidine cyclo-ligase (348 aa).

Belongs to the AIR synthase family.

The protein resides in the cytoplasm. The catalysed reaction is 2-formamido-N(1)-(5-O-phospho-beta-D-ribosyl)acetamidine + ATP = 5-amino-1-(5-phospho-beta-D-ribosyl)imidazole + ADP + phosphate + H(+). Its pathway is purine metabolism; IMP biosynthesis via de novo pathway; 5-amino-1-(5-phospho-D-ribosyl)imidazole from N(2)-formyl-N(1)-(5-phospho-D-ribosyl)glycinamide: step 2/2. This is Phosphoribosylformylglycinamidine cyclo-ligase from Cereibacter sphaeroides (strain ATCC 17023 / DSM 158 / JCM 6121 / CCUG 31486 / LMG 2827 / NBRC 12203 / NCIMB 8253 / ATH 2.4.1.) (Rhodobacter sphaeroides).